The following is a 304-amino-acid chain: Probable 5-dehydro-4-deoxyglucarate dehydratase (304 aa).

It belongs to the DapA family.

It catalyses the reaction 5-dehydro-4-deoxy-D-glucarate + H(+) = 2,5-dioxopentanoate + CO2 + H2O. Its pathway is carbohydrate acid metabolism; D-glucarate degradation; 2,5-dioxopentanoate from D-glucarate: step 2/2. This chain is Probable 5-dehydro-4-deoxyglucarate dehydratase, found in Rhodococcus jostii (strain RHA1).